A 404-amino-acid polypeptide reads, in one-letter code: Photosynthetic reaction center cytochrome c subunit (404 aa).

The signal sequence occupies residues Met1 to Gly22. Residue Cys23 is the site of N-palmitoyl cysteine attachment. Residue Cys23 is the site of S-diacylglycerol cysteine attachment. Heme is bound by residues Met94, Cys107, Cys110, His111, Met130, His144, Cys152, Cys155, His156, Met236, Cys247, Cys250, His251, Cys307, Cys310, and His311. Positions Ala346–Leu404 are disordered.

Component of the photosynthetic reaction center composed of protein subunits L (PufL), M (PufM), H (PuhA) and cytochrome C (PufC). The reaction center interacts with light-harvesting antenna complex LH1. In terms of processing, binds 4 heme groups per subunit.

The protein localises to the cellular chromatophore membrane. The reaction center of purple bacteria contains a tightly bound cytochrome molecule which re-reduces the photo oxidized primary electron donor. In Thermochromatium tepidum (Chromatium tepidum), this protein is Photosynthetic reaction center cytochrome c subunit.